Reading from the N-terminus, the 428-residue chain is NADH-ubiquinone oxidoreductase chain 2 (428 aa).

14 helical membrane-spanning segments follow: residues 22–42, 59–79, 84–104, 108–128, 140–160, 185–205, 218–238, 241–261, 269–289, 292–312, 332–352, 356–376, 384–404, and 408–428; these read IAFLSLLGYFVIMLNIWLHFG, LDESILSALLFILFLGLVIMN, LGWEFHLLLMGGLTGAIYMLT, LLLMVVGFEFLNLSTYLILSL, LLSSAFYTTLLLLAISFFYGL, ILLLGTIAFKLGLVPAHLWVP, WMGSVPKAAVLLWLPTIYPLL, LAPFLLVLSALSFLLSAVLMA, FLAYSAIGHLGFVVAAFAIGD, AYGYYIFIYMIATLAQFVLLS, LGLGFLVIVLTMASLPPFAGF, LLVLFGFLEIGYGIFAVLLIL, YYLKWIQTTFFSVVPFASAPI, and YPNLVSFLVTLILPSTLLLLL.

Belongs to the complex I subunit 2 family.

The protein resides in the mitochondrion inner membrane. The catalysed reaction is a ubiquinone + NADH + 5 H(+)(in) = a ubiquinol + NAD(+) + 4 H(+)(out). Its function is as follows. Core subunit of the mitochondrial membrane respiratory chain NADH dehydrogenase (Complex I) that is believed to belong to the minimal assembly required for catalysis. Complex I functions in the transfer of electrons from NADH to the respiratory chain. The immediate electron acceptor for the enzyme is believed to be ubiquinone. This chain is NADH-ubiquinone oxidoreductase chain 2, found in Hyaloraphidium curvatum (Lower fungus).